Here is a 208-residue protein sequence, read N- to C-terminus: V-type ATP synthase subunit D (208 aa).

The protein belongs to the V-ATPase D subunit family.

Functionally, produces ATP from ADP in the presence of a proton gradient across the membrane. This chain is V-type ATP synthase subunit D, found in Streptococcus pyogenes serotype M3 (strain ATCC BAA-595 / MGAS315).